The chain runs to 440 residues: Putative sodium-coupled neutral amino acid transporter 8 (440 aa).

11 helical membrane passes run 29-49 (AIFI…PWAF), 58-78 (AIMV…ILGY), 100-120 (IGKL…VAFL), 156-176 (FAIT…KEIS), 183-203 (ILGT…YYVM), 223-243 (MFSV…CVTI), 255-275 (WAAV…FTGI), 300-320 (VIIA…IILL), 350-370 (VVIT…VPDI), 373-393 (VISV…GLCL), and 418-438 (VVCG…EIIA).

This sequence belongs to the amino acid/polyamine transporter 2 family.

The protein localises to the membrane. Functionally, putative sodium-dependent amino acid/proton antiporter. The polypeptide is Putative sodium-coupled neutral amino acid transporter 8 (slc38a8) (Xenopus tropicalis (Western clawed frog)).